We begin with the raw amino-acid sequence, 443 residues long: Light-independent protochlorophyllide reductase subunit N (443 aa).

[4Fe-4S] cluster is bound by residues Cys-15, Cys-40, and Cys-99.

This sequence belongs to the BchN/ChlN family. As to quaternary structure, protochlorophyllide reductase is composed of three subunits; BchL, BchN and BchB. Forms a heterotetramer of two BchB and two BchN subunits. It depends on [4Fe-4S] cluster as a cofactor.

It catalyses the reaction chlorophyllide a + oxidized 2[4Fe-4S]-[ferredoxin] + 2 ADP + 2 phosphate = protochlorophyllide a + reduced 2[4Fe-4S]-[ferredoxin] + 2 ATP + 2 H2O. Its pathway is porphyrin-containing compound metabolism; bacteriochlorophyll biosynthesis (light-independent). In terms of biological role, component of the dark-operative protochlorophyllide reductase (DPOR) that uses Mg-ATP and reduced ferredoxin to reduce ring D of protochlorophyllide (Pchlide) to form chlorophyllide a (Chlide). This reaction is light-independent. The NB-protein (BchN-BchB) is the catalytic component of the complex. This Heliobacterium modesticaldum (strain ATCC 51547 / Ice1) protein is Light-independent protochlorophyllide reductase subunit N.